Consider the following 446-residue polypeptide: GTPase Der (446 aa).

EngA-type G domains are found at residues 2 to 166 (TVVA…PEAP) and 179 to 354 (IRVS…RQYN). GTP is bound by residues 8-15 (GRPNVGKS), 55-59 (DTAGF), 118-121 (NKID), 185-192 (GRPNVGKS), 232-236 (DTAGI), and 297-300 (NKWD). A KH-like domain is found at 355–440 (QRVTTGIVNR…PIRLIFRPRQ (86 aa)).

The protein belongs to the TRAFAC class TrmE-Era-EngA-EngB-Septin-like GTPase superfamily. EngA (Der) GTPase family. As to quaternary structure, associates with the 50S ribosomal subunit.

In terms of biological role, GTPase that plays an essential role in the late steps of ribosome biogenesis. The protein is GTPase Der of Syntrophobacter fumaroxidans (strain DSM 10017 / MPOB).